The chain runs to 379 residues: Early boundary activity protein 3 (379 aa).

As to quaternary structure, the heterotrimeric Elba complex consists of Elba1, Elba2 and Elba3.

It localises to the nucleus. The heterotrimeric Elba complex is required for chromatin domain boundary function during early embryogenesis. It binds to a 8-bp sequence 5'-CCAATAAG-3' in the Fab-7 insulator or boundary element in the bithorax complex and contributes to its insulator or boundary activity. Elba3 lacks DNA-binding activity and plays the role of an adapter protein, bringing Elba1 and 2 together, thereby establishing a complex that recognizes the asymmetric sequence motif through the BEN domains of Elba1 and 2. The protein is Early boundary activity protein 3 of Drosophila melanogaster (Fruit fly).